The primary structure comprises 189 residues: Adenylate kinase (189 aa).

An ATP-binding site is contributed by 11 to 16 (GSGKGT). An NMP region spans residues 31-60 (STGDVLRAEIKNGTELGKTAKGYIDQGQLI). AMP is bound by residues Thr-32, Arg-37, 58 to 60 (QLI), 86 to 89 (GFPR), and Gln-93. An LID region spans residues 127 to 137 (KRGKESGRADD). Arg-128 provides a ligand contact to ATP. AMP contacts are provided by Arg-134 and Arg-145. Gly-173 provides a ligand contact to ATP.

This sequence belongs to the adenylate kinase family. In terms of assembly, monomer.

Its subcellular location is the cytoplasm. It carries out the reaction AMP + ATP = 2 ADP. The protein operates within purine metabolism; AMP biosynthesis via salvage pathway; AMP from ADP: step 1/1. Functionally, catalyzes the reversible transfer of the terminal phosphate group between ATP and AMP. Plays an important role in cellular energy homeostasis and in adenine nucleotide metabolism. This chain is Adenylate kinase, found in Bacteroides fragilis (strain ATCC 25285 / DSM 2151 / CCUG 4856 / JCM 11019 / LMG 10263 / NCTC 9343 / Onslow / VPI 2553 / EN-2).